A 154-amino-acid polypeptide reads, in one-letter code: NADPH-dependent 7-cyano-7-deazaguanine reductase (154 aa).

Over residues 1–21 (MPNTDVSSLSMLGQQTETAQS) the composition is skewed to polar residues. Positions 1–28 (MPNTDVSSLSMLGQQTETAQSPEEAVLE) are disordered. C52 acts as the Thioimide intermediate in catalysis. D59 (proton donor) is an active-site residue. Substrate contacts are provided by residues 74–76 (VES) and 93–94 (HE).

This sequence belongs to the GTP cyclohydrolase I family. QueF type 1 subfamily.

It localises to the cytoplasm. It carries out the reaction 7-aminomethyl-7-carbaguanine + 2 NADP(+) = 7-cyano-7-deazaguanine + 2 NADPH + 3 H(+). It functions in the pathway tRNA modification; tRNA-queuosine biosynthesis. Catalyzes the NADPH-dependent reduction of 7-cyano-7-deazaguanine (preQ0) to 7-aminomethyl-7-deazaguanine (preQ1). This Rhizobium johnstonii (strain DSM 114642 / LMG 32736 / 3841) (Rhizobium leguminosarum bv. viciae) protein is NADPH-dependent 7-cyano-7-deazaguanine reductase.